A 630-amino-acid chain; its full sequence is tRNA uridine 5-carboxymethylaminomethyl modification enzyme MnmG (630 aa).

Residue 13 to 18 (GGGHAG) participates in FAD binding. Residue 273 to 287 (GPRYCPSIEDKIHRF) participates in NAD(+) binding.

Belongs to the MnmG family. As to quaternary structure, homodimer. Heterotetramer of two MnmE and two MnmG subunits. FAD serves as cofactor.

The protein resides in the cytoplasm. Functionally, NAD-binding protein involved in the addition of a carboxymethylaminomethyl (cmnm) group at the wobble position (U34) of certain tRNAs, forming tRNA-cmnm(5)s(2)U34. This is tRNA uridine 5-carboxymethylaminomethyl modification enzyme MnmG from Pseudomonas putida (strain W619).